A 2493-amino-acid chain; its full sequence is Adenylate cyclase (2493 aa).

Polar residues-rich tracts occupy residues 1-18 (MLFT…SPEQ), 42-51 (RDSNGSSNFT), 60-78 (SQQY…QPDI), 129-147 (PANS…SISP), and 197-210 (APFS…TSVN). Disordered regions lie at residues 1–85 (MLFT…SSTL), 99–148 (FEHA…ISPS), 197–325 (APFS…SSLS), 355–444 (NSPS…QSQS), 475–565 (GSIT…VNML), 616–660 (QAPV…KTSY), 753–832 (NVGE…GSKS), 854–882 (ALVQ…GAGA), and 904–967 (RPSK…ATGT). Over residues 211–233 (PSAASTASPSTSAATRTRPRGGT) the composition is skewed to low complexity. Composition is skewed to polar residues over residues 234–246 (NASQ…TSFG) and 253–264 (LSSSRSQYSLRP). 2 stretches are compositionally biased toward basic residues: residues 287-303 (AVKK…KKSS) and 404-422 (HLKK…HLAK). A compositionally biased stretch (basic and acidic residues) spans 425 to 434 (KPGEDADSAR). The segment covering 500–525 (PSPSQTPIAERQTSVTSTVESPSHAS) has biased composition (polar residues). The segment covering 534 to 555 (SLRTPSRTTASTSTSSASTVLS) has biased composition (low complexity). A compositionally biased stretch (basic and acidic residues) spans 630 to 640 (TDSELSDRKDS). Residues 641 to 660 (VVSTHSMRSNHSGISPKTSY) show a composition bias toward polar residues. Residues 754-763 (VGEEEDDDDD) are compositionally biased toward acidic residues. Low complexity-rich tracts occupy residues 780–791 (SSSGISSTHASS) and 854–870 (ALVQ…QPSP). Residues 913–935 (RPNTAGSVGATRPSTTTLGSTLS) show a composition bias toward polar residues. The 103-residue stretch at 970–1072 (RNHFIRVYKT…LRFVFRPDSV (103 aa)) folds into the Ras-associating domain. 22 LRR repeats span residues 1086–1107 (TFQH…LYKH), 1110–1132 (WIVS…VQLC), 1134–1155 (SLRT…VRHS), 1157–1178 (TLTH…SLDL), 1181–1202 (ELMS…FSSI), 1204–1225 (TLRN…ICDV), 1227–1248 (SLVD…IANL), 1250–1271 (NLER…MSEL), 1273–1294 (SLRT…LGLP), 1295–1316 (RLQN…LGPQ), 1317–1336 (LTQV…AALT), 1339–1360 (DLTS…LFPQ), 1363–1385 (ALVK…GDLK), 1386–1407 (RLEM…IGDL), 1409–1430 (ALKE…LWLC), 1432–1453 (SLAH…PDIR), 1511–1534 (SLQK…SELT), 1535–1556 (SLEV…SLQT), 1559–1580 (KLRE…DLVV), 1583–1605 (ELRI…GKLK), 1606–1628 (KLAN…HYDW), and 1635–1654 (ELRY…TKLS). Positions 1710 to 2000 (AYGIADALGK…ESIMVMVISV (291 aa)) constitute a PPM-type phosphatase domain. Residues 2058–2194 (ALVFTDIKNS…PMVNRAARIS (137 aa)) form the Guanylate cyclase domain. The Mg(2+) site is built by Asp2063 and Asp2105. 3 disordered regions span residues 2220 to 2241 (DESS…TEEE), 2354 to 2378 (EADR…HGTA), and 2467 to 2493 (PPRA…ELVP). Residues 2470–2485 (ASTSALSLPSPRTSPR) are compositionally biased toward polar residues.

The protein belongs to the adenylyl cyclase class-3 family. Mg(2+) is required as a cofactor.

The catalysed reaction is ATP = 3',5'-cyclic AMP + diphosphate. Its function is as follows. Plays essential roles in regulation of cellular metabolism by catalyzing the synthesis of a second messenger, cAMP. This is Adenylate cyclase (UAC1) from Mycosarcoma maydis (Corn smut fungus).